The following is an 82-amino-acid chain: Putative Fe(2+) transport protein A (82 aa).

This sequence belongs to the FeoA family.

In terms of biological role, might be involved in Fe(2+) ion uptake. This chain is Putative Fe(2+) transport protein A, found in Leptolyngbya boryana (Plectonema boryanum).